The chain runs to 505 residues: ATP synthase subunit alpha (505 aa).

Residue 170–177 (GDRQTGKT) participates in ATP binding.

It belongs to the ATPase alpha/beta chains family. F-type ATPases have 2 components, CF(1) - the catalytic core - and CF(0) - the membrane proton channel. CF(1) has five subunits: alpha(3), beta(3), gamma(1), delta(1), epsilon(1). CF(0) has four main subunits: a, b, b' and c.

It localises to the cellular thylakoid membrane. The enzyme catalyses ATP + H2O + 4 H(+)(in) = ADP + phosphate + 5 H(+)(out). Functionally, produces ATP from ADP in the presence of a proton gradient across the membrane. The alpha chain is a regulatory subunit. This Cyanothece sp. (strain PCC 7425 / ATCC 29141) protein is ATP synthase subunit alpha.